The sequence spans 706 residues: Glycogen [starch] synthase (706 aa).

Arg26 lines the UDP pocket. Residues His191 and Arg197 each contribute to the UDP-alpha-D-glucose site. Alpha-D-glucose 6-phosphate-binding residues include His277, Glu278, Gln280, His283, and Lys287. Residue Arg317 participates in UDP binding. Residue Arg317 coordinates UDP-alpha-D-glucose. An alpha-D-glucose 6-phosphate-binding site is contributed by His491. UDP-alpha-D-glucose-binding residues include Glu500, Trp502, and Gly503. Thr505 provides a ligand contact to UDP. The alpha-D-glucose 6-phosphate site is built by Arg572 and Arg576. The tract at residues Pro670–Arg706 is disordered.

The protein belongs to the glycosyltransferase 3 family. Interacts with glucogenin gnn; the interaction is direct.

The catalysed reaction is [(1-&gt;4)-alpha-D-glucosyl](n) + UDP-alpha-D-glucose = [(1-&gt;4)-alpha-D-glucosyl](n+1) + UDP + H(+). Its pathway is glycan biosynthesis; glycogen biosynthesis. Its activity is regulated as follows. Allosteric activation by glucose-6-phosphate, and phosphorylation by a cAMP-dependent kinase. In terms of biological role, glycogen synthase participates in the glycogen biosynthetic process along with glycogenin and glycogen branching enzyme. Extends the primer composed of a few glucose units formed by glycogenin by adding new glucose units to it. In this context, glycogen synthase transfers the glycosyl residue from UDP-Glc to the non-reducing end of alpha-1,4-glucan. This Neurospora crassa (strain ATCC 24698 / 74-OR23-1A / CBS 708.71 / DSM 1257 / FGSC 987) protein is Glycogen [starch] synthase (gsy-1).